The sequence spans 487 residues: NADH-quinone oxidoreductase subunit N (487 aa).

A run of 13 helical transmembrane segments spans residues 9 to 29 (PVLP…LGVF), 38 to 58 (VSVL…SLGG), 73 to 93 (FAGF…AMSL), 108 to 128 (VLVL…DFIA), 161 to 181 (FVLG…LYGF), 208 to 228 (IIAG…AVPF), 240 to 260 (PTPV…CLLV), 277 to 297 (VVTF…VVQT), 306 to 326 (SSIG…TLGI), 328 to 348 (GVLI…AVIL), 374 to 394 (AFVM…AGFW), 408 to 430 (LYTL…LRIV), and 452 to 472 (LVMA…APLV).

It belongs to the complex I subunit 2 family. As to quaternary structure, NDH-1 is composed of 14 different subunits. Subunits NuoA, H, J, K, L, M, N constitute the membrane sector of the complex.

It is found in the cell inner membrane. It catalyses the reaction a quinone + NADH + 5 H(+)(in) = a quinol + NAD(+) + 4 H(+)(out). NDH-1 shuttles electrons from NADH, via FMN and iron-sulfur (Fe-S) centers, to quinones in the respiratory chain. The immediate electron acceptor for the enzyme in this species is believed to be ubiquinone. Couples the redox reaction to proton translocation (for every two electrons transferred, four hydrogen ions are translocated across the cytoplasmic membrane), and thus conserves the redox energy in a proton gradient. This Paramagnetospirillum magneticum (strain ATCC 700264 / AMB-1) (Magnetospirillum magneticum) protein is NADH-quinone oxidoreductase subunit N.